Reading from the N-terminus, the 1514-residue chain is Helicase SWR1 (1514 aa).

Positions 339–411 (ISYFYKQQDL…EERHKKSLAR (73 aa)) constitute an HSA domain. Positions 465-480 (QVNDDGRSSTPSSDSN) are enriched in polar residues. 2 disordered regions span residues 465-524 (QVND…PTDE) and 538-641 (FNGS…KDQV). Over residues 484–508 (SESDDDMDDELSTSSDEDEEVDADV) the composition is skewed to acidic residues. A compositionally biased stretch (polar residues) spans 513 to 524 (SPASTEATPTDE). Basic and acidic residues predominate over residues 547–563 (SRNKDEKFPTLDKHESS). Residues 564-586 (SSESSVMTGEESSIYSSSENESQ) show a composition bias toward low complexity. Over residues 588 to 597 (ENDRESDDKT) the composition is skewed to basic and acidic residues. Residues 612-623 (SDGDLDLDDSED) show a composition bias toward acidic residues. One can recognise a Helicase ATP-binding domain in the interval 708 to 873 (ASLYNNHTNG…WSLLYFLMPQ (166 aa)). 721–728 (DEMGLGKT) lines the ATP pocket. The DEAH box signature appears at 824-827 (DEAH). The region spanning 1247–1400 (KLQKLAILLQ…NVVIQEGDFT (154 aa)) is the Helicase C-terminal domain. Residues 1469-1490 (NDDFDESTEKKAANEEEENHAE) are disordered. Basic and acidic residues predominate over residues 1475–1490 (STEKKAANEEEENHAE).

It belongs to the SNF2/RAD54 helicase family. SWR1 subfamily. In terms of assembly, component of the SWR1 chromatin-remodeling complex composed of at least ACT1, ARP4, RVB1, RVB2, ARP6, YAF9, VPS71, VPS72, SWC3, SWC4, SWC5, SWC7 and SWR1, and perhaps BDF1.

The protein localises to the nucleus. It carries out the reaction ATP + H2O = ADP + phosphate + H(+). Its function is as follows. Catalytic component of the SWR1 complex which mediates the ATP-dependent exchange of histone H2A for the H2A variant HZT1 leading to transcriptional regulation of selected genes by chromatin remodeling. In Saccharomyces cerevisiae (strain ATCC 204508 / S288c) (Baker's yeast), this protein is Helicase SWR1 (SWR1).